A 301-amino-acid chain; its full sequence is Nucleotide-binding protein Mb1456 (301 aa).

Residue 24–31 (GLSGAGRG) participates in ATP binding. GTP is bound at residue 75 to 78 (DVRS).

It belongs to the RapZ-like family.

Displays ATPase and GTPase activities. In Mycobacterium bovis (strain ATCC BAA-935 / AF2122/97), this protein is Nucleotide-binding protein Mb1456.